A 146-amino-acid polypeptide reads, in one-letter code: Large ribosomal subunit protein uL15 (146 aa).

Positions 1-45 are disordered; sequence MTIKLHHLRPAPGSKTERTRVGRGEGSKGKTAGRGTKGTKARKNV. Positions 15–28 are enriched in basic and acidic residues; the sequence is KTERTRVGRGEGSK.

The protein belongs to the universal ribosomal protein uL15 family. In terms of assembly, part of the 50S ribosomal subunit.

Its function is as follows. Binds to the 23S rRNA. The sequence is that of Large ribosomal subunit protein uL15 from Mycobacteroides abscessus (strain ATCC 19977 / DSM 44196 / CCUG 20993 / CIP 104536 / JCM 13569 / NCTC 13031 / TMC 1543 / L948) (Mycobacterium abscessus).